We begin with the raw amino-acid sequence, 167 residues long: MAYFGCGPCGGSAGYNNCYNNGYGNGYGSNHCRDGFGACQNNVSGRNREVYYEKDNCFNANNNNFYGGRENDSCGGWNAGCNNGNCGGWNSGGCGLPFYGGGCGIGGGCGIGGGCGPIGDCGPIGGGCGPIGGGCGPVGGWRKGYKGGYGGAPSSKLCRGLGYKKRN.

Its subcellular location is the virion. This is an uncharacterized protein from Acanthamoeba polyphaga (Amoeba).